Reading from the N-terminus, the 225-residue chain is Probable 3-keto-L-gulonate-6-phosphate decarboxylase (225 aa).

Substrate is bound at residue Asp11. Mg(2+) contacts are provided by Glu33 and Asp62. Arg202 provides a ligand contact to substrate.

Belongs to the HPS/KGPDC family. KGPDC subfamily. Homodimer. Mg(2+) is required as a cofactor.

It carries out the reaction 3-dehydro-L-gulonate 6-phosphate + H(+) = L-xylulose 5-phosphate + CO2. Its function is as follows. Catalyzes the decarboxylation of 3-keto-L-gulonate-6-P into L-xylulose-5-P. This Haemophilus influenzae (strain ATCC 51907 / DSM 11121 / KW20 / Rd) protein is Probable 3-keto-L-gulonate-6-phosphate decarboxylase (sgbH).